The chain runs to 323 residues: AA9 family lytic polysaccharide monooxygenase A (323 aa).

The N-terminal stretch at 1–19 (MKSFISLLGLSFLTCHASA) is a signal peptide. Positions 20 and 90 each coordinate Cu(2+). Cysteine 59 and cysteine 175 are oxidised to a cystine. Residues histidine 161 and glutamine 170 each contribute to the O2 site. Tyrosine 172 lines the Cu(2+) pocket. Residue asparagine 215 is glycosylated (N-linked (GlcNAc...) asparagine). The CBM1 domain occupies 287-323 (AVVQKFGQCGGQGWTGGTTCVAGSTCTATNAYYSQCL).

This sequence belongs to the polysaccharide monooxygenase AA9 family. Cu(2+) is required as a cofactor.

It localises to the secreted. The catalysed reaction is [(1-&gt;4)-beta-D-glucosyl]n+m + reduced acceptor + O2 = 4-dehydro-beta-D-glucosyl-[(1-&gt;4)-beta-D-glucosyl]n-1 + [(1-&gt;4)-beta-D-glucosyl]m + acceptor + H2O.. Functionally, lytic polysaccharide monooxygenase (LPMO) that depolymerizes crystalline and amorphous polysaccharides via the oxidation of scissile alpha- or beta-(1-4)-glycosidic bonds, yielding C1 and C4 oxidation products. Catalysis by LPMOs requires the reduction of the active-site copper from Cu(II) to Cu(I) by a reducing agent and H(2)O(2) or O(2) as a cosubstrate. This is AA9 family lytic polysaccharide monooxygenase A from Botryotinia fuckeliana (strain B05.10) (Noble rot fungus).